Reading from the N-terminus, the 379-residue chain is Protein RecA (379 aa).

ATP is bound at residue 79-86 (GPESSGKT).

Belongs to the RecA family.

The protein resides in the cytoplasm. In terms of biological role, can catalyze the hydrolysis of ATP in the presence of single-stranded DNA, the ATP-dependent uptake of single-stranded DNA by duplex DNA, and the ATP-dependent hybridization of homologous single-stranded DNAs. It interacts with LexA causing its activation and leading to its autocatalytic cleavage. The sequence is that of Protein RecA from Streptococcus uberis (strain ATCC BAA-854 / 0140J).